We begin with the raw amino-acid sequence, 339 residues long: D-erythrose-4-phosphate dehydrogenase (339 aa).

An NAD(+)-binding site is contributed by 11–12 (RI). Residues 153–155 (SCT), arginine 199, 212–213 (TK), and arginine 235 contribute to the substrate site. Cysteine 154 functions as the Nucleophile in the catalytic mechanism. Residue asparagine 317 participates in NAD(+) binding.

It belongs to the glyceraldehyde-3-phosphate dehydrogenase family. Epd subfamily. Homotetramer.

It is found in the cytoplasm. It carries out the reaction D-erythrose 4-phosphate + NAD(+) + H2O = 4-phospho-D-erythronate + NADH + 2 H(+). Its pathway is cofactor biosynthesis; pyridoxine 5'-phosphate biosynthesis; pyridoxine 5'-phosphate from D-erythrose 4-phosphate: step 1/5. In terms of biological role, catalyzes the NAD-dependent conversion of D-erythrose 4-phosphate to 4-phosphoerythronate. In Shewanella frigidimarina (strain NCIMB 400), this protein is D-erythrose-4-phosphate dehydrogenase.